A 230-amino-acid chain; its full sequence is Cytidylate kinase (230 aa).

Residue 10–18 (GFSSTGKST) coordinates ATP.

It belongs to the cytidylate kinase family. Type 1 subfamily.

The protein localises to the cytoplasm. The enzyme catalyses CMP + ATP = CDP + ADP. It catalyses the reaction dCMP + ATP = dCDP + ADP. The polypeptide is Cytidylate kinase (Flavobacterium johnsoniae (strain ATCC 17061 / DSM 2064 / JCM 8514 / BCRC 14874 / CCUG 350202 / NBRC 14942 / NCIMB 11054 / UW101) (Cytophaga johnsonae)).